We begin with the raw amino-acid sequence, 213 residues long: Probable nicotinate-nucleotide adenylyltransferase (213 aa).

This sequence belongs to the NadD family.

The catalysed reaction is nicotinate beta-D-ribonucleotide + ATP + H(+) = deamido-NAD(+) + diphosphate. Its pathway is cofactor biosynthesis; NAD(+) biosynthesis; deamido-NAD(+) from nicotinate D-ribonucleotide: step 1/1. Catalyzes the reversible adenylation of nicotinate mononucleotide (NaMN) to nicotinic acid adenine dinucleotide (NaAD). This Shigella boydii serotype 18 (strain CDC 3083-94 / BS512) protein is Probable nicotinate-nucleotide adenylyltransferase.